Reading from the N-terminus, the 141-residue chain is Nucleoside diphosphate kinase (141 aa).

The ATP site is built by lysine 11, phenylalanine 59, arginine 87, threonine 93, arginine 104, and asparagine 114. Residue histidine 117 is the Pros-phosphohistidine intermediate of the active site.

This sequence belongs to the NDK family. In terms of assembly, homotetramer. The cofactor is Mg(2+).

It localises to the cytoplasm. The catalysed reaction is a 2'-deoxyribonucleoside 5'-diphosphate + ATP = a 2'-deoxyribonucleoside 5'-triphosphate + ADP. It carries out the reaction a ribonucleoside 5'-diphosphate + ATP = a ribonucleoside 5'-triphosphate + ADP. In terms of biological role, major role in the synthesis of nucleoside triphosphates other than ATP. The ATP gamma phosphate is transferred to the NDP beta phosphate via a ping-pong mechanism, using a phosphorylated active-site intermediate. The protein is Nucleoside diphosphate kinase of Polaromonas naphthalenivorans (strain CJ2).